The chain runs to 1239 residues: Inner tegument protein (1239 aa).

Disordered regions lie at residues 1-20 (MASA…DAQP), 669-704 (GESP…GGGP), 959-980 (RPPP…DTPP), and 1087-1239 (GRNA…AEDE). The interval 615 to 1239 (NELPKTRSLA…RPPRPTAEDE (625 aa)) is interaction with large tegument protein. The segment covering 1112-1123 (DSSPFSFSSSDF) has biased composition (low complexity). The span at 1139-1148 (VPGGGGGGEG) shows a compositional bias: gly residues. Residues 1151-1170 (EEERERPSDIDTAARARKVE) show a composition bias toward basic and acidic residues. Positions 1180 to 1189 (RTTPSPSRRA) are enriched in low complexity. Residues 1219–1232 (VRPRTRRGATRRPP) show a composition bias toward basic residues.

The protein belongs to the herpesviridae inner tegument protein family. In terms of assembly, interacts (via C-terminus) with the large tegument protein/LTP (via N-terminus).

It is found in the virion tegument. The protein localises to the host cytoplasm. It localises to the host nucleus. Its subcellular location is the host Golgi apparatus. The protein resides in the host trans-Golgi network. In terms of biological role, plays an essential role in cytoplasmic secondary envelopment during viral egress. Interacts with the capsid via the large tegument protein/LTP and participates in its transport to the host trans-Golgi network (TGN) where secondary envelopment occurs. Modulates tegumentation and capsid accumulation at the viral assembly complex. In Homo sapiens (Human), this protein is Inner tegument protein.